Here is a 200-residue protein sequence, read N- to C-terminus: 3-isopropylmalate dehydratase small subunit (200 aa).

This sequence belongs to the LeuD family. LeuD type 1 subfamily. Heterodimer of LeuC and LeuD.

It carries out the reaction (2R,3S)-3-isopropylmalate = (2S)-2-isopropylmalate. Its pathway is amino-acid biosynthesis; L-leucine biosynthesis; L-leucine from 3-methyl-2-oxobutanoate: step 2/4. Catalyzes the isomerization between 2-isopropylmalate and 3-isopropylmalate, via the formation of 2-isopropylmaleate. This chain is 3-isopropylmalate dehydratase small subunit, found in Sodalis glossinidius (strain morsitans).